Here is a 949-residue protein sequence, read N- to C-terminus: UvrABC system protein A (949 aa).

An ATP-binding site is contributed by 42–49 (GLSGSGKS). Residues 262–289 (CPVCSYSLPELEPRLFSFNNPMGSCPTC) form a C4-type zinc finger. 2 ABC transporter domains span residues 319 to 596 (WDKR…ENSV) and 616 to 945 (VNPD…KYLK). An ATP-binding site is contributed by 649–656 (GVSGSGKS). The C4-type zinc finger occupies 748–774 (CEACQGDGVIKVEMHFLPDVYVPCEVC).

This sequence belongs to the ABC transporter superfamily. UvrA family. Forms a heterotetramer with UvrB during the search for lesions.

The protein localises to the cytoplasm. The UvrABC repair system catalyzes the recognition and processing of DNA lesions. UvrA is an ATPase and a DNA-binding protein. A damage recognition complex composed of 2 UvrA and 2 UvrB subunits scans DNA for abnormalities. When the presence of a lesion has been verified by UvrB, the UvrA molecules dissociate. This is UvrABC system protein A from Neisseria meningitidis serogroup B (strain ATCC BAA-335 / MC58).